The sequence spans 190 residues: Hypoxanthine/guanine phosphoribosyltransferase (190 aa).

Belongs to the purine/pyrimidine phosphoribosyltransferase family. Archaeal HPRT subfamily. Homodimer.

Its subcellular location is the cytoplasm. It catalyses the reaction IMP + diphosphate = hypoxanthine + 5-phospho-alpha-D-ribose 1-diphosphate. The catalysed reaction is GMP + diphosphate = guanine + 5-phospho-alpha-D-ribose 1-diphosphate. The protein operates within purine metabolism; IMP biosynthesis via salvage pathway; IMP from hypoxanthine: step 1/1. Its function is as follows. Catalyzes a salvage reaction resulting in the formation of IMP that is energically less costly than de novo synthesis. The protein is Hypoxanthine/guanine phosphoribosyltransferase of Methanobacterium paludis (strain DSM 25820 / JCM 18151 / SWAN1).